Here is a 131-residue protein sequence, read N- to C-terminus: D-ribose pyranase (131 aa).

The active-site Proton donor is the His-20. Substrate is bound by residues Asp-28, His-98, and 120 to 122 (YAN).

This sequence belongs to the RbsD / FucU family. RbsD subfamily. As to quaternary structure, homodecamer.

It is found in the cytoplasm. The catalysed reaction is beta-D-ribopyranose = beta-D-ribofuranose. It participates in carbohydrate metabolism; D-ribose degradation; D-ribose 5-phosphate from beta-D-ribopyranose: step 1/2. Catalyzes the interconversion of beta-pyran and beta-furan forms of D-ribose. The sequence is that of D-ribose pyranase from Clostridium botulinum (strain Eklund 17B / Type B).